The primary structure comprises 268 residues: 4-hydroxy-tetrahydrodipicolinate reductase (268 aa).

NAD(+)-binding positions include 10–15 (GASGRM), Asp36, 99–101 (GTT), and 123–126 (APNM). The active-site Proton donor/acceptor is the His156. (S)-2,3,4,5-tetrahydrodipicolinate is bound at residue His157. Residue Lys160 is the Proton donor of the active site. A (S)-2,3,4,5-tetrahydrodipicolinate-binding site is contributed by 166–167 (GT).

The protein belongs to the DapB family.

The protein resides in the cytoplasm. The enzyme catalyses (S)-2,3,4,5-tetrahydrodipicolinate + NAD(+) + H2O = (2S,4S)-4-hydroxy-2,3,4,5-tetrahydrodipicolinate + NADH + H(+). The catalysed reaction is (S)-2,3,4,5-tetrahydrodipicolinate + NADP(+) + H2O = (2S,4S)-4-hydroxy-2,3,4,5-tetrahydrodipicolinate + NADPH + H(+). The protein operates within amino-acid biosynthesis; L-lysine biosynthesis via DAP pathway; (S)-tetrahydrodipicolinate from L-aspartate: step 4/4. Functionally, catalyzes the conversion of 4-hydroxy-tetrahydrodipicolinate (HTPA) to tetrahydrodipicolinate. The polypeptide is 4-hydroxy-tetrahydrodipicolinate reductase (Herminiimonas arsenicoxydans).